The primary structure comprises 54 residues: MAVPKKKMSKSRRNSRKSNWKKKVLKKVLFALSLGKSFEANTNVNFSFGDKLPQ.

A disordered region spans residues 1-20; it reads MAVPKKKMSKSRRNSRKSNW.

This sequence belongs to the bacterial ribosomal protein bL32 family.

The protein localises to the plastid. It localises to the chloroplast. In Euglena gracilis, this protein is Large ribosomal subunit protein bL32c (rpl32).